Reading from the N-terminus, the 231-residue chain is RNA pyrophosphohydrolase (231 aa).

Positions 6 to 149 (GFRPNVGIIL…KRDVYQLALT (144 aa)) constitute a Nudix hydrolase domain. The short motif at 38–59 (GGIKYGETPVQAMYRELHEETG) is the Nudix box element. Residues 157–190 (RPQPRTERPGGHHHGQRYPRMASSVNAPPGASMA) are disordered.

Belongs to the Nudix hydrolase family. RppH subfamily. Requires a divalent metal cation as cofactor.

Accelerates the degradation of transcripts by removing pyrophosphate from the 5'-end of triphosphorylated RNA, leading to a more labile monophosphorylated state that can stimulate subsequent ribonuclease cleavage. The sequence is that of RNA pyrophosphohydrolase from Paraburkholderia phymatum (strain DSM 17167 / CIP 108236 / LMG 21445 / STM815) (Burkholderia phymatum).